We begin with the raw amino-acid sequence, 327 residues long: GTP 3',8-cyclase (327 aa).

Residues 8-232 (AFARKFYYLR…LQRSRSDGPA (225 aa)) enclose the Radical SAM core domain. Arginine 17 contributes to the GTP binding site. 2 residues coordinate [4Fe-4S] cluster: cysteine 24 and cysteine 28. Tyrosine 30 is an S-adenosyl-L-methionine binding site. Cysteine 31 contacts [4Fe-4S] cluster. Arginine 66 serves as a coordination point for GTP. Glycine 70 provides a ligand contact to S-adenosyl-L-methionine. Residue threonine 97 coordinates GTP. Residue serine 121 coordinates S-adenosyl-L-methionine. Lysine 158 provides a ligand contact to GTP. Methionine 192 contributes to the S-adenosyl-L-methionine binding site. [4Fe-4S] cluster-binding residues include cysteine 255 and cysteine 258. Residue 260–262 (RLR) coordinates GTP. Cysteine 272 is a binding site for [4Fe-4S] cluster.

Belongs to the radical SAM superfamily. MoaA family. In terms of assembly, monomer and homodimer. It depends on [4Fe-4S] cluster as a cofactor.

The catalysed reaction is GTP + AH2 + S-adenosyl-L-methionine = (8S)-3',8-cyclo-7,8-dihydroguanosine 5'-triphosphate + 5'-deoxyadenosine + L-methionine + A + H(+). It participates in cofactor biosynthesis; molybdopterin biosynthesis. In terms of biological role, catalyzes the cyclization of GTP to (8S)-3',8-cyclo-7,8-dihydroguanosine 5'-triphosphate. In Photorhabdus laumondii subsp. laumondii (strain DSM 15139 / CIP 105565 / TT01) (Photorhabdus luminescens subsp. laumondii), this protein is GTP 3',8-cyclase.